Here is a 249-residue protein sequence, read N- to C-terminus: NAD(P)H-quinone oxidoreductase subunit T, chloroplastic (249 aa).

The transit peptide at 1–45 (MAYATSTYARTSCIILPKIQNGAHFTDDTKAFRRITARRVTRIYA) directs the protein to the chloroplast. Positions 44-84 (YASQGPTKPSKPSPGVDTRIHWESPDEGWIGGRSDPAKSVD) are disordered. In terms of domain architecture, J spans 106–172 (SHYQFLGVST…ETRRFYDWTL (67 aa)). The helical transmembrane segment at 224–244 (LTFDILIVLFAVCCIAFVIVF) threads the bilayer.

In terms of assembly, part of the chloroplast NDH complex, composed of a mixture of chloroplast and nucleus encoded subunits. Component of the electron donor-binding subcomplex, at least composed of NDHS, NDHT and NDHU.

It localises to the plastid. The protein localises to the chloroplast thylakoid membrane. It catalyses the reaction a plastoquinone + NADH + (n+1) H(+)(in) = a plastoquinol + NAD(+) + n H(+)(out). It carries out the reaction a plastoquinone + NADPH + (n+1) H(+)(in) = a plastoquinol + NADP(+) + n H(+)(out). In terms of biological role, NDH shuttles electrons from NAD(P)H:plastoquinone, via FMN and iron-sulfur (Fe-S) centers, to quinones in the photosynthetic chain and possibly in a chloroplast respiratory chain. The immediate electron acceptor for the enzyme in this species is believed to be plastoquinone. Couples the redox reaction to proton translocation, and thus conserves the redox energy in a proton gradient. Required for the accumulation of both the NDH subcomplex A and NDHS. The protein is NAD(P)H-quinone oxidoreductase subunit T, chloroplastic of Arabidopsis thaliana (Mouse-ear cress).